Reading from the N-terminus, the 518-residue chain is Glutamate--cysteine ligase (518 aa).

This sequence belongs to the glutamate--cysteine ligase type 1 family. Type 1 subfamily.

The catalysed reaction is L-cysteine + L-glutamate + ATP = gamma-L-glutamyl-L-cysteine + ADP + phosphate + H(+). It participates in sulfur metabolism; glutathione biosynthesis; glutathione from L-cysteine and L-glutamate: step 1/2. This Escherichia fergusonii (strain ATCC 35469 / DSM 13698 / CCUG 18766 / IAM 14443 / JCM 21226 / LMG 7866 / NBRC 102419 / NCTC 12128 / CDC 0568-73) protein is Glutamate--cysteine ligase.